We begin with the raw amino-acid sequence, 581 residues long: Chaperonin GroEL 1 (581 aa).

Residues 29-32 (TIGP), 86-90 (DGTTT), G413, and D492 each bind ATP.

Belongs to the chaperonin (HSP60) family. In terms of assembly, forms a cylinder of 14 subunits composed of two heptameric rings stacked back-to-back. Interacts with the co-chaperonin GroES.

It is found in the cytoplasm. It carries out the reaction ATP + H2O + a folded polypeptide = ADP + phosphate + an unfolded polypeptide.. Together with its co-chaperonin GroES, plays an essential role in assisting protein folding. The GroEL-GroES system forms a nano-cage that allows encapsulation of the non-native substrate proteins and provides a physical environment optimized to promote and accelerate protein folding. In Prochlorococcus marinus subsp. pastoris (strain CCMP1986 / NIES-2087 / MED4), this protein is Chaperonin GroEL 1.